Consider the following 4194-residue polypeptide: Hybrid PKS-NRPS synthetase pydA (4194 aa).

The 437-residue stretch at 14-450 (REPIAVVGSG…GTNAHAIVEN (437 aa)) folds into the Ketosynthase family 3 (KS3) domain. Residues Cys187, His326, and His370 each act as for beta-ketoacyl synthase activity in the active site. Residues 565-887 (VFTGQGAQWA…QRGKDDVQAF (323 aa)) enclose the Malonyl-CoA:ACP transacylase (MAT) domain. The interval 953 to 1088 (HPLLGTRTTD…GRVIVITGEA (136 aa)) is N-terminal hotdog fold. Residues 953–1257 (HPLLGTRTTD…VVSFSEPTAE (305 aa)) enclose the PKS/mFAS DH domain. Residue His985 is the Proton acceptor; for dehydratase activity of the active site. The tract at residues 1103–1257 (LVDIPEDRFY…VVSFSEPTAE (155 aa)) is C-terminal hotdog fold. The Proton donor; for dehydratase activity role is filled by Asp1163. A methyltransferase (cMeT) domain region spans residues 1302–1596 (YMRQLASLFP…FSGVDSTTHE (295 aa)). In terms of domain architecture, Ketoreductase (KR) spans 2141-2314 (TYVFFGLTSD…AGSILHIGAV (174 aa)). The 85-residue stretch at 2421–2505 (TTAEEALEIV…ELVEFAVENM (85 aa)) folds into the Carrier 1 domain. The residue at position 2465 (Ser2465) is an O-(pantetheine 4'-phosphoryl)serine. The segment at 2512-2583 (NMSDSLNAVP…ERDSSTASLE (72 aa)) is disordered. Residues 2526-2547 (APVIPASPPSGSVSSAPSSDPP) are compositionally biased toward low complexity. Positions 2550–2565 (TAETSQHLSESSSKTS) are enriched in polar residues. Residues 2566-2577 (QPDEKQSEERDS) show a composition bias toward basic and acidic residues. The tract at residues 2591-3023 (EKVLPVSPGQ…QILKDVSLFT (433 aa)) is condensation. The adenylation stretch occupies residues 3056-3467 (ANPPQEIALR…RIEGDTQIKL (412 aa)). The Carrier 2 domain occupies 3580–3660 (TQLTEAESEL…AMAAVIQDLS (81 aa)). Position 3620 is an O-(pantetheine 4'-phosphoryl)serine (Ser3620). The Thioester reductase (TE) domain occupies 3701 to 3920 (ITGATGFLGK…VDLISVERAA (220 aa)). Disordered stretches follow at residues 4031-4110 (RRDK…DEQI) and 4163-4194 (KGEYPCGSDGREEAEEAEWQCDEGHGDGEPDD). A compositionally biased stretch (basic and acidic residues) spans 4057-4072 (RGRDVSPRHPALDHPD). Over residues 4174–4183 (EEAEEAEWQC) the composition is skewed to acidic residues. Basic and acidic residues predominate over residues 4184–4194 (DEGHGDGEPDD).

The protein in the C-terminal section; belongs to the NRP synthetase family. Requires pantetheine 4'-phosphate as cofactor.

The protein operates within mycotoxin biosynthesis. In terms of biological role, hybrid PKS-NRPS synthetase; part of the gene cluster that mediates the biosynthesis of pyrrocidines, fungal natural products containing a macrocyclic para-cyclophane connected to a decahydrofluorene ring system that show potent antibiotic activities toward Gram-negative bacteria. Within the pathway, the PKS-NRPS pydA, with the help of the trans-enoyl reductase pydC, synthesize the polyketide-tyrosyl acyl thioester product which can be reductively off-loaded by the terminal reductase (R) domain in pydA. The PKS module of pydA acts in combination with the trans-acting enoyl reductase pydC to produce a methylated polyketide attached to the ACP domain. In parallel, the adenylation (A) domain of the NRPS module activated L-tyrosine, which is then transferred to the ACP domain. The condensation (C) domain subsequently link this group to the polyketide chain, forming an enzyme-bound amide. The alpha/beta hydrolase pydG is then required to catalyze the subsequent Knoevenagel condensation that affords the 3-pyrrolin-2-one ring, whereas the four proteins pydB, pydE, pydX and pydZ then function synergistically to form the cyclophane. PydB and the membrane-bound pydX and pydZ are lipid-binding proteins that can sequester and mold the pdyG product into the inverse S-shape. Binding of the medium chain reductase pydE to the complex would trigger the cascade oxidative cyclization. PydY is involved in the Diels-Alder cycloaddition that forms the decahydrofluorene core. Additional non-enzymatic hydroxylation yields pyrrocidine A2 which can be further reduced into pyrrocidine B by an endogenous reductase. This is Hybrid PKS-NRPS synthetase pydA from Acremonium sp.